A 216-amino-acid polypeptide reads, in one-letter code: MRDQWICLALVLCALHSACGLYFHISETERKCFIEEVPDETTVIVNYKVELYDPRSNGFMPSSPGIGMHVEVRDSDDKVILSRVYSSQGRMSFTSHTPGEHVICMYSNSTAWFNGAQLRVHLDIQVGEHAIDYANVAQKEKLTELQLRIRQLLDQVEQITKEQNYQRYREERFRHTSESTNSRVLWWSLAQTVVLVCMGFWQMRHLKSFFEAKKLV.

Positions 1-20 (MRDQWICLALVLCALHSACG) are cleaved as a signal peptide. Residues 21-183 (LYFHISETER…RHTSESTNSR (163 aa)) are Lumenal-facing. Positions 30 to 126 (RKCFIEEVPD…QLRVHLDIQV (97 aa)) constitute a GOLD domain. Residues 134–164 (ANVAQKEKLTELQLRIRQLLDQVEQITKEQN) adopt a coiled-coil conformation. A helical membrane pass occupies residues 184-203 (VLWWSLAQTVVLVCMGFWQM). The Cytoplasmic portion of the chain corresponds to 204-216 (RHLKSFFEAKKLV). The short motif at 213-216 (KKLV) is the Prevents secretion from ER element.

Belongs to the EMP24/GP25L family.

It is found in the endoplasmic reticulum membrane. Functionally, eca and bai are essential, though not redundant, for dorsoventral patterning of the embryo. Specifically required during early embryogenesis for the activity of maternal tkv, while the zygotic tkv is not affected. In Drosophila mojavensis (Fruit fly), this protein is Transmembrane emp24 domain-containing protein eca.